The chain runs to 345 residues: Quinolinate synthase (345 aa).

Positions 69 and 87 each coordinate iminosuccinate. Position 132 (cysteine 132) interacts with [4Fe-4S] cluster. Iminosuccinate contacts are provided by residues 158 to 160 (YVN) and serine 175. [4Fe-4S] cluster is bound at residue cysteine 217. Residues 243–245 (HPE) and threonine 260 contribute to the iminosuccinate site. Position 303 (cysteine 303) interacts with [4Fe-4S] cluster.

The protein belongs to the quinolinate synthase family. Type 2 subfamily. Requires [4Fe-4S] cluster as cofactor.

The protein localises to the cytoplasm. It catalyses the reaction iminosuccinate + dihydroxyacetone phosphate = quinolinate + phosphate + 2 H2O + H(+). It participates in cofactor biosynthesis; NAD(+) biosynthesis; quinolinate from iminoaspartate: step 1/1. Its function is as follows. Catalyzes the condensation of iminoaspartate with dihydroxyacetone phosphate to form quinolinate. The polypeptide is Quinolinate synthase (Agrobacterium fabrum (strain C58 / ATCC 33970) (Agrobacterium tumefaciens (strain C58))).